Here is an 88-residue protein sequence, read N- to C-terminus: Small ribosomal subunit protein uS15c (88 aa).

Belongs to the universal ribosomal protein uS15 family. As to quaternary structure, part of the 30S ribosomal subunit.

The protein resides in the plastid. It localises to the chloroplast. This chain is Small ribosomal subunit protein uS15c (rps15), found in Calycanthus floridus var. glaucus (Eastern sweetshrub).